The following is a 1377-amino-acid chain: DNA-directed RNA polymerase subunit beta' (1377 aa).

Zn(2+) is bound by residues Cys-60, Cys-62, Cys-75, and Cys-78. Asp-449, Asp-451, and Asp-453 together coordinate Mg(2+). Zn(2+) is bound by residues Cys-777, Cys-851, Cys-858, and Cys-861.

This sequence belongs to the RNA polymerase beta' chain family. In terms of assembly, the RNAP catalytic core consists of 2 alpha, 1 beta, 1 beta' and 1 omega subunit. When a sigma factor is associated with the core the holoenzyme is formed, which can initiate transcription. Mg(2+) serves as cofactor. It depends on Zn(2+) as a cofactor.

It catalyses the reaction RNA(n) + a ribonucleoside 5'-triphosphate = RNA(n+1) + diphosphate. Functionally, DNA-dependent RNA polymerase catalyzes the transcription of DNA into RNA using the four ribonucleoside triphosphates as substrates. This is DNA-directed RNA polymerase subunit beta' from Borreliella burgdorferi (strain ZS7) (Borrelia burgdorferi).